Here is a 120-residue protein sequence, read N- to C-terminus: MNKNHLSKRVRLLKINEFFFVFQKPQRIKVHSMTLFSRSNKLNFPRIGLAISKKYIKHSHERNRIKRHVRETFRTHKHNLLSLDFILTVHSKQILSLTNNNLIEELKKLWYHYQNYQQKS.

This sequence belongs to the RnpA family. In terms of assembly, consists of a catalytic RNA component (M1 or rnpB) and a protein subunit.

It carries out the reaction Endonucleolytic cleavage of RNA, removing 5'-extranucleotides from tRNA precursor.. Its function is as follows. RNaseP catalyzes the removal of the 5'-leader sequence from pre-tRNA to produce the mature 5'-terminus. It can also cleave other RNA substrates such as 4.5S RNA. The protein component plays an auxiliary but essential role in vivo by binding to the 5'-leader sequence and broadening the substrate specificity of the ribozyme. The sequence is that of Ribonuclease P protein component from Blochmanniella floridana.